The sequence spans 470 residues: Minor capsid protein L2 (470 aa).

The Nuclear localization signal motif lies at 1 to 12 (MVSHRAARRKRA). An intrachain disulfide couples Cys-21 to Cys-27. The Nuclear localization signal signature appears at 451-459 (FFLKKRKRI).

It belongs to the papillomaviridae L2 protein family. In terms of assembly, interacts with major capsid protein L1. Interacts with E2; this interaction inhibits E2 transcriptional activity but not the DNA replication function E2. Interacts with host GADD45GIP1. Interacts with host HSPA8; this interaction is required for L2 nuclear translocation. Interacts with host importins KPNB2 and KPNB3. Forms a complex with importin alpha2-beta1 heterodimers via interaction with the importin alpha2 adapter. Interacts with host DYNLT1; this interaction is essential for virus intracellular transport during entry. Interacts (via C-terminus) with host retromer subunits VPS35 and VPS29. Post-translationally, highly phosphorylated.

Its subcellular location is the virion. It localises to the host nucleus. The protein resides in the host early endosome. The protein localises to the host Golgi apparatus. Functionally, minor protein of the capsid that localizes along the inner surface of the virion, within the central cavities beneath the L1 pentamers. Plays a role in capsid stabilization through interaction with the major capsid protein L1. Once the virion enters the host cell, L2 escorts the genomic DNA into the nucleus by promoting escape from the endosomal compartments and traffic through the host Golgi network. Mechanistically, the C-terminus of L2 possesses a cell-penetrating peptide that protudes from the host endosome, interacts with host cytoplasmic retromer cargo and thereby mediates the capsid delivery to the host trans-Golgi network. Plays a role through its interaction with host dynein in the intracellular microtubule-dependent transport of viral capsid toward the nucleus. Mediates the viral genome import into the nucleus through binding to host importins. Once within the nucleus, L2 localizes viral genomes to host PML bodies in order to activate early gene expression for establishment of infection. Later on, promotes late gene expression by interacting with the viral E2 protein and by inhibiting its transcriptional activation functions. During virion assembly, encapsidates the genome by direct interaction with the viral DNA. The protein is Minor capsid protein L2 of Human papillomavirus 39.